Here is a 404-residue protein sequence, read N- to C-terminus: Cysteine desulfurase IscS (404 aa).

Pyridoxal 5'-phosphate-binding positions include 75–76, Asn155, Gln183, and 203–205; these read AT and SAH. Lys206 is modified (N6-(pyridoxal phosphate)lysine). Pyridoxal 5'-phosphate is bound at residue Thr243. Cys328 serves as the catalytic Cysteine persulfide intermediate. A [2Fe-2S] cluster-binding site is contributed by Cys328.

This sequence belongs to the class-V pyridoxal-phosphate-dependent aminotransferase family. NifS/IscS subfamily. Homodimer. Forms a heterotetramer with IscU, interacts with other sulfur acceptors. It depends on pyridoxal 5'-phosphate as a cofactor.

It localises to the cytoplasm. The catalysed reaction is (sulfur carrier)-H + L-cysteine = (sulfur carrier)-SH + L-alanine. The protein operates within cofactor biosynthesis; iron-sulfur cluster biosynthesis. Its function is as follows. Master enzyme that delivers sulfur to a number of partners involved in Fe-S cluster assembly, tRNA modification or cofactor biosynthesis. Catalyzes the removal of elemental sulfur atoms from cysteine to produce alanine. Functions as a sulfur delivery protein for Fe-S cluster synthesis onto IscU, an Fe-S scaffold assembly protein, as well as other S acceptor proteins. This chain is Cysteine desulfurase IscS, found in Buchnera aphidicola subsp. Acyrthosiphon pisum (strain 5A).